The sequence spans 421 residues: Serine hydroxymethyltransferase (421 aa).

Residues Leu123 and 127 to 129 (GHL) contribute to the (6S)-5,6,7,8-tetrahydrofolate site. Residue Lys232 is modified to N6-(pyridoxal phosphate)lysine.

This sequence belongs to the SHMT family. As to quaternary structure, homodimer. It depends on pyridoxal 5'-phosphate as a cofactor.

It localises to the cytoplasm. It carries out the reaction (6R)-5,10-methylene-5,6,7,8-tetrahydrofolate + glycine + H2O = (6S)-5,6,7,8-tetrahydrofolate + L-serine. It participates in one-carbon metabolism; tetrahydrofolate interconversion. The protein operates within amino-acid biosynthesis; glycine biosynthesis; glycine from L-serine: step 1/1. Functionally, catalyzes the reversible interconversion of serine and glycine with tetrahydrofolate (THF) serving as the one-carbon carrier. This reaction serves as the major source of one-carbon groups required for the biosynthesis of purines, thymidylate, methionine, and other important biomolecules. Also exhibits THF-independent aldolase activity toward beta-hydroxyamino acids, producing glycine and aldehydes, via a retro-aldol mechanism. The chain is Serine hydroxymethyltransferase from Ehrlichia ruminantium (strain Gardel).